We begin with the raw amino-acid sequence, 326 residues long: Ribosomal RNA small subunit methyltransferase H (326 aa).

S-adenosyl-L-methionine contacts are provided by residues 45–47 (GGH), D65, D113, and Q120. Residues 299 to 326 (PSAEEITRNPRSRSARLRAAERIAHDGR) form a disordered region. Basic and acidic residues predominate over residues 316 to 326 (RAAERIAHDGR).

This sequence belongs to the methyltransferase superfamily. RsmH family.

It is found in the cytoplasm. It carries out the reaction cytidine(1402) in 16S rRNA + S-adenosyl-L-methionine = N(4)-methylcytidine(1402) in 16S rRNA + S-adenosyl-L-homocysteine + H(+). Specifically methylates the N4 position of cytidine in position 1402 (C1402) of 16S rRNA. This chain is Ribosomal RNA small subunit methyltransferase H, found in Thermomicrobium roseum (strain ATCC 27502 / DSM 5159 / P-2).